Reading from the N-terminus, the 198-residue chain is Holliday junction branch migration complex subunit RuvA (198 aa).

Residues 1-63 (MYDYIKGQLT…EDAQLLFGFH (63 aa)) form a domain I region. The tract at residues 64–142 (SEEEKDVFLK…EAPKEESSKL (79 aa)) is domain II. The tract at residues 143–147 (PKAKH) is flexible linker. Positions 148–198 (QENEQLDEAIEALLALGYKATELKKIRAFFEGTSETAEQYIKSALKMLMKG) are domain III.

Belongs to the RuvA family. As to quaternary structure, homotetramer. Forms an RuvA(8)-RuvB(12)-Holliday junction (HJ) complex. HJ DNA is sandwiched between 2 RuvA tetramers; dsDNA enters through RuvA and exits via RuvB. An RuvB hexamer assembles on each DNA strand where it exits the tetramer. Each RuvB hexamer is contacted by two RuvA subunits (via domain III) on 2 adjacent RuvB subunits; this complex drives branch migration. In the full resolvosome a probable DNA-RuvA(4)-RuvB(12)-RuvC(2) complex forms which resolves the HJ.

It localises to the cytoplasm. In terms of biological role, the RuvA-RuvB-RuvC complex processes Holliday junction (HJ) DNA during genetic recombination and DNA repair, while the RuvA-RuvB complex plays an important role in the rescue of blocked DNA replication forks via replication fork reversal (RFR). RuvA specifically binds to HJ cruciform DNA, conferring on it an open structure. The RuvB hexamer acts as an ATP-dependent pump, pulling dsDNA into and through the RuvAB complex. HJ branch migration allows RuvC to scan DNA until it finds its consensus sequence, where it cleaves and resolves the cruciform DNA. This Streptococcus equi subsp. zooepidemicus (strain MGCS10565) protein is Holliday junction branch migration complex subunit RuvA.